The chain runs to 697 residues: Choline transporter-like protein 2 (697 aa).

The Cytoplasmic segment spans residues 1 to 30; it reads MDMEEKPKYGEPRKFDPSFKGPIQNRGCTD. Residues 31 to 51 form a helical membrane-spanning segment; that stretch reads IVCCIIFIIAILGYLAVGILA. At 52–226 the chain is on the extracellular side; sequence WTHGDPRKVI…KIFEDYTKSW (175 aa). 2 N-linked (GlcNAc...) asparagine glycosylation sites follow: Asn-113 and Asn-204. The helical transmembrane segment at 227-247 threads the bilayer; it reads YWILICLLIAVVLSLIFIVLL. Residues 248-249 lie on the Cytoplasmic side of the membrane; the sequence is RF. Residues 250–270 form a helical membrane-spanning segment; sequence LAGVMVWVMILMVVAVIAYGI. Topologically, residues 271-309 are extracellular; it reads AHCSIKYVSLKDTPGSNITLQQLGFQPDFAVYLHIRQTW. A glycan (N-linked (GlcNAc...) asparagine) is linked at Asn-287. A helical transmembrane segment spans residues 310-330; sequence LAFIIILAILELIIILLLIFL. The Cytoplasmic portion of the chain corresponds to 331-353; that stretch reads RNRIRVAVELMKEASRAIGYVMS. The chain crosses the membrane as a helical span at residues 354-374; sequence SLVFPIFTFFLLAIVIAFWGV. The Extracellular portion of the chain corresponds to 375–435; it reads NAVFLSTSSE…YGGETPYHKY (61 aa). 2 N-linked (GlcNAc...) asparagine glycosylation sites follow: Asn-391 and Asn-406. A helical transmembrane segment spans residues 436 to 456; it reads LILLQFYNVFLFFWCANFVTA. Residues 457-498 are Cytoplasmic-facing; that stretch reads LGQMTLAGAFASYYWAFDKSKDMPAFPLCASLGRSLRYHTGS. A helical membrane pass occupies residues 499 to 519; it reads LAFGSLLLAIVQVIRVLLEYI. Residues 520-593 lie on the Extracellular side of the membrane; that stretch reads DHKLKGAENK…RVVVLDKVTD (74 aa). A helical membrane pass occupies residues 594–614; sequence FILFLGKLLIVGLVGIFAFFF. Residues 615–632 are Cytoplasmic-facing; sequence FSGQTDAFKGTAPSLHYY. A helical transmembrane segment spans residues 633–653; sequence WVPILTVLVCSYLIAHGFFSV. The Extracellular segment spans residues 654 to 697; sequence YAMCVDTLFLCFLEDLERNDGSAERPYLMSENLLNVLKKKNQAN.

Belongs to the CTL (choline transporter-like) family.

The protein localises to the cell membrane. Its subcellular location is the mitochondrion outer membrane. The enzyme catalyses choline(out) + n H(+)(in) = choline(in) + n H(+)(out). It catalyses the reaction ethanolamine(out) + n H(+)(in) = ethanolamine(in) + n H(+)(out). In terms of biological role, choline/H+ antiporter, mainly in mitochodria. Also acts as a low-affinity ethanolamine/H+ antiporter, regulating the supply of extracellular ethanolamine (Etn) for the CDP-Etn pathway, redistribute intracellular Etn and balance the CDP-Cho and CDP-Etn arms of the Kennedy pathway. The polypeptide is Choline transporter-like protein 2 (slc44a2) (Danio rerio (Zebrafish)).